Here is a 433-residue protein sequence, read N- to C-terminus: Peptidoglycan glycosyltransferase RodA (433 aa).

The next 12 helical transmembrane spans lie at 9-29 (FDYLLLLTMLALTSIGILFIY), 44-64 (YLKQIVWAVMGVVLMLSVSMY), 74-94 (TLIFAGFILLLIYTRLFGRYV), 100-120 (WIGVGEFGIQISEFAKIAYIL), 158-178 (LGTASVYLPIFLVMCFIAGFP), 181-201 (LIFAVVCVVLLTLLFTLLPLW), 221-241 (LSLFVFFSLSATSAVAVVGYL), 249-269 (YWITYALGMVSISYGASLLGV), 295-315 (WHIIQSMIAIGSGGAFGMGYL), 341-361 (WGFVGGVIVFGLYLLFFLHTL), 378-398 (GVLGMFLFHFVVNVGMTMGIM), and 400-420 (ITGIPLLLLSYGGSSLWTAMI).

Belongs to the SEDS family. MrdB/RodA subfamily.

The protein localises to the cell inner membrane. The catalysed reaction is [GlcNAc-(1-&gt;4)-Mur2Ac(oyl-L-Ala-gamma-D-Glu-L-Lys-D-Ala-D-Ala)](n)-di-trans,octa-cis-undecaprenyl diphosphate + beta-D-GlcNAc-(1-&gt;4)-Mur2Ac(oyl-L-Ala-gamma-D-Glu-L-Lys-D-Ala-D-Ala)-di-trans,octa-cis-undecaprenyl diphosphate = [GlcNAc-(1-&gt;4)-Mur2Ac(oyl-L-Ala-gamma-D-Glu-L-Lys-D-Ala-D-Ala)](n+1)-di-trans,octa-cis-undecaprenyl diphosphate + di-trans,octa-cis-undecaprenyl diphosphate + H(+). It participates in cell wall biogenesis; peptidoglycan biosynthesis. Peptidoglycan polymerase that is essential for cell wall elongation. In Treponema pallidum (strain Nichols), this protein is Peptidoglycan glycosyltransferase RodA.